A 130-amino-acid polypeptide reads, in one-letter code: Small ribosomal subunit protein uS9 (130 aa).

The protein belongs to the universal ribosomal protein uS9 family.

The polypeptide is Small ribosomal subunit protein uS9 (Nitratidesulfovibrio vulgaris (strain ATCC 29579 / DSM 644 / CCUG 34227 / NCIMB 8303 / VKM B-1760 / Hildenborough) (Desulfovibrio vulgaris)).